The chain runs to 377 residues: Caspase-4 (377 aa).

The interval 1-59 (MAEGNHRKKPLKVLESLGKDFLTGVLDNLVEQNVLNWKEEEKKKYYDAKTEDKVRVMAD) is required for LPS-binding. The propeptide occupies 1–80 (MAEGNHRKKP…MLLQTFFNID (80 aa)). The CARD domain maps to 1 to 91 (MAEGNHRKKP…ISPNKKAHPN (91 aa)). Ala2 bears the N-acetylalanine mark. Ser83 carries the phosphoserine modification. The disordered stretch occupies residues 84–104 (PNKKAHPNMEAGPPESGESTD). Residues His210 and Cys258 contribute to the active site. The propeptide occupies 271–289 (SPASLEVASSQSSENLEED). At Arg314 the chain carries (Microbial infection) ADP-riboxanated arginine.

This sequence belongs to the peptidase C14A family. In terms of assembly, heterotetramer that consists of two anti-parallel arranged heterodimers, each one formed by a 20 kDa (Caspase-4 subunit p20) and a 10 kDa (Caspase-4 subunit p10) subunit. Upon direct LPS-binding, forms large homooligomers, resulting in its activation. These oligomers are often referred to as 'non-canonical inflammasomes'. In its precursor form, interacts with TMEM214; this interaction is required for association with the endoplasmic reticulum membrane. Interacts with CASP1. Interacts with NOD2. Interacts with SERPINB1; this interaction regulates CASP4 activity. Heterotetramer that consists of two anti-parallel arranged heterodimers, each one formed by a 20 kDa (Caspase-4 subunit p20) and a 10 kDa (Caspase-4 subunit p10) subunit. As to quaternary structure, (Microbial infection) Interacts with NleF protein from pathogenic E.coli; this interaction leads to enzyme inhibition. In terms of assembly, (Microbial infection) Interacts with cathepsin CTSG; the interaction is promoted by the Td92 surface protein of the periodontal pathogen T.denticola and leads to CASP4 activation. Post-translationally, in response to activation signals, undergoes autoproteolytic cleavage and activation. In terms of processing, (Microbial infection) ADP-riboxanation by S.flexneri OspC3 blocks CASP4 autoprocessing, preventing CASP4 activation and ability to recognize and cleave GSDMD, thereby thwarting the inflammasome/pyroptosis-mediated defense. In terms of tissue distribution, widely expressed, including in keratinocytes and colonic and small intestinal epithelial cells (at protein level). Not detected in brain.

The protein localises to the cytoplasm. It is found in the cytosol. The protein resides in the endoplasmic reticulum membrane. Its subcellular location is the mitochondrion. It localises to the inflammasome. The protein localises to the secreted. It catalyses the reaction Strict requirement for Asp at the P1 position. It has a preferred cleavage sequence of Tyr-Val-Ala-Asp-|- but also cleaves at Asp-Glu-Val-Asp-|-.. With respect to regulation, activated by homooligomerization induced by direct binding to cytosolic LPS, in a TLR4-independent manner. In addition to LPS, CASP4/CASP11 may also be activated by oxidized phospholipid 1-palmitoyl-2-arachidonoyl- sn-glycero-3-phosphorylcholine, an oxidized phospholipid (oxPAPC), in dendritic cells, promoting adaptive immunity. The role of oxPAPC is however unclear and another report suggests that oxPAPC competes with LPS-binding and inhibits the non-canonical inflammasome in macrophages. In terms of biological role, inflammatory caspase that acts as the effector of the non-canonical inflammasome by mediating lipopolysaccharide (LPS)-induced pyroptosis. Also indirectly activates the NLRP3 and NLRP6 inflammasomes. Acts as a thiol protease that cleaves a tetrapeptide after an Asp residue at position P1: catalyzes cleavage of CGAS, GSDMD and IL18. Effector of the non-canonical inflammasome independently of NLRP3 inflammasome and CASP1: the non-canonical inflammasome promotes pyroptosis through GSDMD cleavage without involving secretion of cytokine IL1B. In the non-canonical inflammasome, CASP4 is activated by direct binding to the lipid A moiety of LPS without the need of an upstream sensor. LPS-binding promotes CASP4 activation and CASP4-mediated cleavage of GSDMD and IL18, followed by IL18 secretion through the GSDMD pore, pyroptosis of infected cells and their extrusion into the gut lumen. Also indirectly promotes secretion of mature cytokines (IL1A and HMGB1) downstream of GSDMD-mediated pyroptosis via activation of the NLRP3 and NLRP6 inflammasomes. Involved in NLRP3-dependent CASP1 activation and IL1B secretion in response to non-canonical activators, such as UVB radiation or cholera enterotoxin. Involved in NLRP6 inflammasome-dependent activation in response to lipoteichoic acid (LTA), a cell-wall component of Gram-positive bacteria, which leads to CASP1 activation and IL1B secretion. Involved in LPS-induced IL6 secretion; this activity may not require caspase enzymatic activity. The non-canonical inflammasome is required for innate immunity to cytosolic, but not vacuolar, bacteria. Plays a crucial role in the restriction of S.typhimurium replication in colonic epithelial cells during infection. Activation of the non-canonical inflammasome in brain endothelial cells can lead to excessive pyroptosis, leading to blood-brain barrier breakdown. Pyroptosis limits bacterial replication, while cytokine secretion promotes the recruitment and activation of immune cells and triggers mucosal inflammation. May also act as an activator of adaptive immunity in dendritic cells, following activation by oxidized phospholipid 1-palmitoyl-2-arachidonoyl- sn-glycero-3-phosphorylcholine, an oxidized phospholipid (oxPAPC). Involved in cell death induced by endoplasmic reticulum stress and by treatment with cytotoxic APP peptides found in Alzheimer's patient brains. Cleavage of GSDMD is not strictly dependent on the consensus cleavage site but depends on an exosite interface on CASP4 that recognizes and binds the Gasdermin-D, C-terminal (GSDMD-CT) part. Catalyzes cleavage and maturation of IL18; IL18 processing also depends of the exosite interface on CASP4. In contrast, it does not directly process IL1B. During non-canonical inflammasome activation, cuts CGAS and may play a role in the regulation of antiviral innate immune activation. Its function is as follows. (Microbial infection) In response to the Td92 surface protein of the periodontal pathogen T.denticola, activated by cathepsin CTSG which leads to production and secretion of IL1A and pyroptosis of gingival fibroblasts. The sequence is that of Caspase-4 from Homo sapiens (Human).